The chain runs to 260 residues: DNA repair protein RecO (260 aa).

This sequence belongs to the RecO family.

Involved in DNA repair and RecF pathway recombination. The sequence is that of DNA repair protein RecO from Ligilactobacillus salivarius (strain UCC118) (Lactobacillus salivarius).